A 152-amino-acid polypeptide reads, in one-letter code: Leukocyte-associated immunoglobulin-like receptor 2 (152 aa).

The first 21 residues, 1 to 21 (MSPHLTALLGLVLCLAQTIHT), serve as a signal peptide directing secretion. One can recognise an Ig-like C2-type domain in the interval 29–117 (PSISAEPGTV…GWSEHSDFLE (89 aa)). A disulfide bridge connects residues cysteine 49 and cysteine 101. Residues 120-152 (VKESSGGPDSPDTEPGSSAGTVPGTEASGFDAP) form a disordered region.

The protein localises to the secreted. The sequence is that of Leukocyte-associated immunoglobulin-like receptor 2 (LAIR2) from Homo sapiens (Human).